A 331-amino-acid polypeptide reads, in one-letter code: Ketol-acid reductoisomerase (NADP(+)) (331 aa).

The KARI N-terminal Rossmann domain maps to 2–181; that stretch reads TKVYYEDAVK…GATRAGVIET (180 aa). NADP(+)-binding positions include 25 to 28, arginine 48, serine 52, and 82 to 85; these read YGSQ and DETQ. Residue histidine 107 is part of the active site. An NADP(+)-binding site is contributed by glycine 133. Residues 182 to 327 enclose the KARI C-terminal knotted domain; the sequence is TFKEETETDL…AELREMMPFV (146 aa). Mg(2+) contacts are provided by aspartate 190, glutamate 194, glutamate 226, and glutamate 230. Residue serine 251 coordinates substrate.

Belongs to the ketol-acid reductoisomerase family. Mg(2+) is required as a cofactor.

The catalysed reaction is (2R)-2,3-dihydroxy-3-methylbutanoate + NADP(+) = (2S)-2-acetolactate + NADPH + H(+). It carries out the reaction (2R,3R)-2,3-dihydroxy-3-methylpentanoate + NADP(+) = (S)-2-ethyl-2-hydroxy-3-oxobutanoate + NADPH + H(+). The protein operates within amino-acid biosynthesis; L-isoleucine biosynthesis; L-isoleucine from 2-oxobutanoate: step 2/4. Its pathway is amino-acid biosynthesis; L-valine biosynthesis; L-valine from pyruvate: step 2/4. Involved in the biosynthesis of branched-chain amino acids (BCAA). Catalyzes an alkyl-migration followed by a ketol-acid reduction of (S)-2-acetolactate (S2AL) to yield (R)-2,3-dihydroxy-isovalerate. In the isomerase reaction, S2AL is rearranged via a Mg-dependent methyl migration to produce 3-hydroxy-3-methyl-2-ketobutyrate (HMKB). In the reductase reaction, this 2-ketoacid undergoes a metal-dependent reduction by NADPH to yield (R)-2,3-dihydroxy-isovalerate. The chain is Ketol-acid reductoisomerase (NADP(+)) from Listeria innocua serovar 6a (strain ATCC BAA-680 / CLIP 11262).